The sequence spans 687 residues: Adhesion G-protein coupled receptor G1 (687 aa).

The N-terminal stretch at M1 to S25 is a signal peptide. Heparin is bound at residue G26 to R33. Over G26–Y402 the chain is Extracellular. 2 cysteine pairs are disulfide-bonded: C35–C91 and C121–C177. 3 N-linked (GlcNAc...) asparagine glycosylation sites follow: N39, N148, and N171. L190–P200 is a heparin binding site. The GAIN-B domain occupies D224–V395. N-linked (GlcNAc...) asparagine glycans are attached at residues N234, N303, N324, and N341. 2 disulfides stabilise this stretch: C346–C377 and C366–C379. The tract at residues C346–V395 is GPS. Residues Y384–A397 form a stachel region. Residues L403 to A423 form a helical membrane-spanning segment. Residues A424 to N442 lie on the Cytoplasmic side of the membrane. A helical transmembrane segment spans residues L443–T463. The Extracellular portion of the chain corresponds to G464 to T471. A helical transmembrane segment spans residues S472–Y492. Over N493–K512 the chain is Cytoplasmic. The chain crosses the membrane as a helical span at residues L513 to V533. The Extracellular segment spans residues N534–G570. The chain crosses the membrane as a helical span at residues L571–L591. Topologically, residues R592 to V603 are cytoplasmic. The chain crosses the membrane as a helical span at residues L604–F624. The Extracellular segment spans residues A625–Q630. Residues L631–W651 form a helical membrane-spanning segment. The Cytoplasmic segment spans residues Y652 to I687. The disordered stretch occupies residues S664–I687. Over residues S678–I687 the composition is skewed to low complexity.

Belongs to the G-protein coupled receptor 2 family. LN-TM7 subfamily. In terms of assembly, heterodimer of 2 chains generated by proteolytic processing; the large extracellular N-terminal fragment (ADGRG1 NT) and the membrane-bound C-terminal fragment (ADGRG1-CT) predominantly remain associated and non-covalently linked. ADGRG1 NT self-associates in a trans-trans manner; the homophilic interaction enhances receptor signaling. Interacts with TGM2. Interacts with heparin; leading to the reduction of ADGRG1 shedding. Interacts with COL3A1. Part of a GPCR-tetraspanin complex at least consisting of ADGRG1, CD81, eventually CD9, and GNA11 in which CD81 is enhancing the association of ADGRG1 with GNA11. In terms of processing, autoproteolytically cleaved into 2 fragments; the large extracellular N-terminal fragment and the membroune-bound C-terminal fragment predominantly remain associated and non-covalently linked. N-glycosylated. The secreted ADGRG1 N-terminal fragment is heavily glycosylated. Post-translationally, ubiquitinated. Undergoes polyubiquitination upon activation. In terms of tissue distribution, expressed in neural progenitor cells in fetal forbrain. Expressed in migrating neurons. Expressed in radial glial endfeet (at protein level). Expressed in peritubular myoid cells, Sertoli cells, and germ cells of the testis.

Its subcellular location is the cell membrane. It localises to the secreted. The protein resides in the membrane raft. With respect to regulation, forms a heterodimer of 2 chains generated by proteolytic processing that remain associated through non-covalent interactions mediated by the GAIN-B domain. In the inactivated receptor, the Stachel sequence (also named stalk) is embedded in the GAIN-B domain, where it adopts a beta-strand conformation. On activation, the Stachel moves into the 7 transmembrane region and adopts a twisted hook-shaped configuration that forms contacts within the receptor, leading to coupling of a G-alpha protein, which activates signaling. The cleaved GAIN-B and N-terminal domains can then dissociate from the rest of the receptor. Activated by the small-molecule agonist, 3-alpha-acetoxydihydrodeoxygedunin (3-alpha-DOG). Its function is as follows. Adhesion G-protein coupled receptor (aGPCR) for steroid hormone 17alpha-hydroxypregnenolone (17-OH), which is involved in cell adhesion and cell-cell interactions. Ligand binding causes a conformation change that triggers signaling via guanine nucleotide-binding proteins (G proteins) and modulates the activity of downstream effectors, such as RhoA pathway. ADGRG1 is coupled to G(12) and/or G(13) G proteins (GNA12 and GNA13, respectively) and mediates the activation Rho small GTPases. Acts as a potent suppressor of ferroptosis: binding to 17-OH-binding initiates signaling that down-regulates CD36 and alleviates ferroptosis-induced liver injury. Ligand-binding also induces cell adhesion activity via association with proteins such as collagen III/COL3A1 and TGM2. Mediates cell matrix adhesion in developing neurons and hematopoietic stem cells. Involved in cortical development, specifically in maintenance of the pial basement membrane integrity and in cortical lamination: association with COL3A1 in the developing brain inhibits neuronal migration via activation of the RhoA pathway. Together with TGM2, acts as a regulator of myelination and myelin repair in oligodendrocyte precursor cells. Acts as a hemostatic sensor of shear force: G protein-coupled receptor signaling is activated in response to shear force in platelets, promoting G(13) G protein signaling, and platelet shape change and aggregation in a COL3A1-dependent manner. Acts as an inhibitor of VEGFA production thereby inhibiting angiogenesis through a signaling pathway mediated by PRKCA. Plays a role in the maintenance of hematopoietic stem cells in bone marrow niche. Plays an essential role in testis development. In terms of biological role, adhesion G-protein coupled receptor (aGPCR) for phosphatidylserine, which is involved in microglia-mediated synapse pruning during development. Required to maintain appropriate synaptic numbers in several brain regions in a time- and circuit-dependent fashion: phosphatidylserine-binding acts as a 'eat-me' signal for apoptotic cells, leading to microglial engulfment of phosphatidylserine-positive synapses. This chain is Adhesion G-protein coupled receptor G1, found in Mus musculus (Mouse).